Reading from the N-terminus, the 542-residue chain is DM7 family protein CG15333 (542 aa).

It belongs to the DM7 family.

The protein is DM7 family protein CG15333 of Drosophila melanogaster (Fruit fly).